The primary structure comprises 85 residues: U4-theraphotoxin-Hhn1f (85 aa).

The N-terminal stretch at 1-22 (MKVTLIAILTCAAVLVLHTTAA) is a signal peptide. Residues 23–48 (EELEAESQLMEVGMPDTELAAVDEER) constitute a propeptide that is removed on maturation. Cys71 and Cys82 are disulfide-bonded.

The protein belongs to the neurotoxin 12 (Hwtx-2) family. 02 (Hwtx-2) subfamily. As to expression, expressed by the venom gland.

Its subcellular location is the secreted. In terms of biological role, postsynaptic neurotoxin. The sequence is that of U4-theraphotoxin-Hhn1f from Cyriopagopus hainanus (Chinese bird spider).